Consider the following 490-residue polypeptide: Mitochondrial-processing peptidase subunit beta (490 aa).

Residues 1-46 (MAAAAVARAVLFSAARRRLCGFTERLLIGGAAGRSLYFGGNRLRST) constitute a mitochondrion transit peptide. Histidine 102 lines the Zn(2+) pocket. The Proton acceptor role is filled by glutamate 105. Zn(2+)-binding residues include histidine 106 and glutamate 182.

It belongs to the peptidase M16 family. In terms of assembly, heterodimer of PMPCA (alpha) and PMPCB (beta) subunits, forming the mitochondrial processing protease (MPP) in which PMPCA is involved in substrate recognition and binding and PMPCB is the catalytic subunit. Zn(2+) is required as a cofactor.

Its subcellular location is the mitochondrion matrix. The enzyme catalyses Release of N-terminal transit peptides from precursor proteins imported into the mitochondrion, typically with Arg in position P2.. Binding to PMPCA is required for catalytic activity. In terms of biological role, catalytic subunit of the essential mitochondrial processing protease (MPP), which cleaves the mitochondrial sequence off newly imported precursors proteins. Preferentially, cleaves after an arginine at position P2. Required for PINK1 turnover by coupling PINK1 mitochondrial import and cleavage, which results in subsequent PINK1 proteolysis. The protein is Mitochondrial-processing peptidase subunit beta (PMPCB) of Bos taurus (Bovine).